Here is a 309-residue protein sequence, read N- to C-terminus: Taste receptor type 2 member 46 (309 aa).

Position 1 (Met1) is a topological domain, extracellular. A helical membrane pass occupies residues 2–22; the sequence is ITFLPITFSILIVVIFFIGNF. The Cytoplasmic segment spans residues 23 to 46; it reads ANGFIALINSIEWVKRQKISFAGQ. The helical transmembrane segment at 47–67 threads the bilayer; that stretch reads ILTALAVSRVGLLWVLSLHWY. Over 68 to 86 the chain is Extracellular; it reads ATEFNLAFHSVEVRSTAYN. Residues 87–107 traverse the membrane as a helical segment; it reads VWVVTNHFSNWLSTSLSMFYL. At 108–126 the chain is on the cytoplasmic side; sequence LRIATFSNLIFLHLNRRVK. The chain crosses the membrane as a helical span at residues 127–147; the sequence is SVILVTLLGPLLFLVCQLFVM. Topologically, residues 148–178 are extracellular; that stretch reads NMNQIVRTKEYEGNMTWKIKLKSAMYLSNTT. 2 N-linked (GlcNAc...) asparagine glycosylation sites follow: Asn161 and Asn176. A helical membrane pass occupies residues 179–199; it reads VAMLANFVPLTLTLISFLLLI. Over 200-229 the chain is Cytoplasmic; the sequence is CSLCKHLKKMRVHGKGSQDPSTKVHTKALQ. A helical transmembrane segment spans residues 230–250; it reads IVTSFLLVCAIYFLSIILSVW. Residues 251-259 lie on the Extracellular side of the membrane; it reads NSGGLENKP. Residues 260 to 280 form a helical membrane-spanning segment; it reads FFMFCQAIKFSYPSTHPFILI. Over 281-309 the chain is Cytoplasmic; it reads WGNKTLKQTFLSVLRNVRYWVKGQKPSSP.

Belongs to the G-protein coupled receptor T2R family.

It is found in the membrane. The protein resides in the cell projection. Its subcellular location is the cilium membrane. Its function is as follows. Receptor that may play a role in the perception of bitterness and is gustducin-linked. May play a role in sensing the chemical composition of the gastrointestinal content. The activity of this receptor may stimulate alpha gustducin, mediate PLC-beta-2 activation and lead to the gating of TRPM5. In airway epithelial cells, binding of bitter compounds increases the intracellular calcium ion concentration and stimulates ciliary beat frequency. The chain is Taste receptor type 2 member 46 (TAS2R46) from Papio hamadryas (Hamadryas baboon).